Here is a 523-residue protein sequence, read N- to C-terminus: Asc-type amino acid transporter 1 (523 aa).

The tract at residues 1–28 is disordered; that stretch reads MAGHTQQPSGRGNPRPAPSPSPVPGTVP. Pro residues predominate over residues 15–25; the sequence is RPAPSPSPVPG. Helical transmembrane passes span 40 to 60, 72 to 92, 113 to 133, 268 to 288, 310 to 330, 362 to 382, 388 to 408, 424 to 444, and 448 to 468; these read IGLLSACTIIIGNIIGSGIFI, VGLALFVWVLGGGVTALGSLC, IFGGLAGFLLLWSAVLIMYPT, AIFISIPLVTFVYTFTNIAYF, LLGYFSWVMPVSVALSTFGGI, CTPIPALLVCCGATAVIMLVG, INYVSFINYLCYGVTILGLLL, LLIPVAYLVFWAFLLVFSFIS, and VCGVGVIIILTGVPIFFLGVF. A disordered region spans residues 499–523; sequence APEEEENGPCPPSLLPATDKPSKPQ.

It belongs to the amino acid-polyamine-organocation (APC) superfamily. As to quaternary structure, disulfide-linked heterodimer with the amino acid transport protein SLC3A2/4F2hc. As to expression, expressed in brain, heart, kidney, liver, lung, pancreas, placenta, and skeletal muscle.

It is found in the cell membrane. The catalysed reaction is L-alanine(in) + glycine(out) = L-alanine(out) + glycine(in). The enzyme catalyses L-serine(out) + L-alanine(in) = L-serine(in) + L-alanine(out). It carries out the reaction L-threonine(out) + L-alanine(in) = L-threonine(in) + L-alanine(out). It catalyses the reaction L-cysteine(out) + L-alanine(in) = L-cysteine(in) + L-alanine(out). The catalysed reaction is 2-aminoisobutanoate(out) + L-alanine(in) = 2-aminoisobutanoate(in) + L-alanine(out). The enzyme catalyses D-serine(out) + L-alanine(in) = D-serine(in) + L-alanine(out). It carries out the reaction D-alanine(out) + L-alanine(in) = D-alanine(in) + L-alanine(out). It catalyses the reaction L-valine(out) + L-alanine(in) = L-valine(in) + L-alanine(out). The catalysed reaction is L-methionine(out) + L-alanine(in) = L-methionine(in) + L-alanine(out). The enzyme catalyses beta-alanine(out) + L-alanine(in) = beta-alanine(in) + L-alanine(out). It carries out the reaction D-cysteine(out) + L-alanine(in) = D-cysteine(in) + L-alanine(out). It catalyses the reaction D-threonine(out) + L-alanine(in) = D-threonine(in) + L-alanine(out). The catalysed reaction is D-isoleucine(out) + D-serine(in) = D-isoleucine(in) + D-serine(out). The enzyme catalyses D-serine(in) = D-serine(out). Its function is as follows. Associates with SLC3A2/4F2hc to form a functional heterodimeric complex that translocates small neutral L- and D-amino acids across the plasma membrane. Preferentially mediates exchange transport, but can also operate via facilitated diffusion. Acts as a major transporter for glycine, L- and D-serine in the central nervous system. At the spinal cord and brainstem regulates glycine metabolism and glycinergic inhibitory neurotransmission by providing for glycine de novo synthesis from L-serine and glycine recycling from astrocytes to glycinergic motor neurons. At Schaffer collateral-CA1 synapses mediates D-serine and glycine release that modulates post-synaptic activation of NMDA receptors and excitatory glutamatergic transmission. May regulate D-serine release from mesenchymal progenitors located in developing subcutaneous adipose tissue, favoring white adipocyte over thermogenic beige adipocyte lineage commitment. This chain is Asc-type amino acid transporter 1 (SLC7A10), found in Homo sapiens (Human).